Consider the following 271-residue polypeptide: 3-methyl-2-oxobutanoate hydroxymethyltransferase (271 aa).

Positions 51 and 90 each coordinate Mg(2+). Residues 51–52 (DS), Asp90, and Lys118 each bind 3-methyl-2-oxobutanoate. Glu120 contacts Mg(2+). Glu186 acts as the Proton acceptor in catalysis.

Belongs to the PanB family. In terms of assembly, homodecamer; pentamer of dimers. Mg(2+) is required as a cofactor.

The protein localises to the cytoplasm. It carries out the reaction 3-methyl-2-oxobutanoate + (6R)-5,10-methylene-5,6,7,8-tetrahydrofolate + H2O = 2-dehydropantoate + (6S)-5,6,7,8-tetrahydrofolate. The protein operates within cofactor biosynthesis; (R)-pantothenate biosynthesis; (R)-pantoate from 3-methyl-2-oxobutanoate: step 1/2. Catalyzes the reversible reaction in which hydroxymethyl group from 5,10-methylenetetrahydrofolate is transferred onto alpha-ketoisovalerate to form ketopantoate. The chain is 3-methyl-2-oxobutanoate hydroxymethyltransferase from Xanthomonas oryzae pv. oryzae (strain PXO99A).